The primary structure comprises 234 residues: Ribonuclease HII (234 aa).

Positions 30–221 constitute an RNase H type-2 domain; it reads GPVAGVDEAG…VRNAAMGSSL (192 aa). Residues Asp36, Glu37, and Asp130 each contribute to the a divalent metal cation site.

The protein belongs to the RNase HII family. Mn(2+) is required as a cofactor. The cofactor is Mg(2+).

Its subcellular location is the cytoplasm. It catalyses the reaction Endonucleolytic cleavage to 5'-phosphomonoester.. Its function is as follows. Endonuclease that specifically degrades the RNA of RNA-DNA hybrids. The protein is Ribonuclease HII of Mycobacteroides abscessus (strain ATCC 19977 / DSM 44196 / CCUG 20993 / CIP 104536 / JCM 13569 / NCTC 13031 / TMC 1543 / L948) (Mycobacterium abscessus).